The following is a 353-amino-acid chain: Quinolinate synthase (353 aa).

2 residues coordinate iminosuccinate: His47 and Ser68. Cys113 contacts [4Fe-4S] cluster. Residues 139-141 (YAN) and Ser156 each bind iminosuccinate. Cys200 is a [4Fe-4S] cluster binding site. Residues 226–228 (HPE) and Thr243 contribute to the iminosuccinate site. Cys297 serves as a coordination point for [4Fe-4S] cluster.

It belongs to the quinolinate synthase family. Type 1 subfamily. [4Fe-4S] cluster serves as cofactor.

The protein localises to the cytoplasm. The enzyme catalyses iminosuccinate + dihydroxyacetone phosphate = quinolinate + phosphate + 2 H2O + H(+). It participates in cofactor biosynthesis; NAD(+) biosynthesis; quinolinate from iminoaspartate: step 1/1. Catalyzes the condensation of iminoaspartate with dihydroxyacetone phosphate to form quinolinate. This Vibrio parahaemolyticus serotype O3:K6 (strain RIMD 2210633) protein is Quinolinate synthase.